The following is a 572-amino-acid chain: Proline--tRNA ligase (572 aa).

It belongs to the class-II aminoacyl-tRNA synthetase family. ProS type 1 subfamily. In terms of assembly, homodimer.

The protein localises to the cytoplasm. The catalysed reaction is tRNA(Pro) + L-proline + ATP = L-prolyl-tRNA(Pro) + AMP + diphosphate. Its function is as follows. Catalyzes the attachment of proline to tRNA(Pro) in a two-step reaction: proline is first activated by ATP to form Pro-AMP and then transferred to the acceptor end of tRNA(Pro). As ProRS can inadvertently accommodate and process non-cognate amino acids such as alanine and cysteine, to avoid such errors it has two additional distinct editing activities against alanine. One activity is designated as 'pretransfer' editing and involves the tRNA(Pro)-independent hydrolysis of activated Ala-AMP. The other activity is designated 'posttransfer' editing and involves deacylation of mischarged Ala-tRNA(Pro). The misacylated Cys-tRNA(Pro) is not edited by ProRS. The chain is Proline--tRNA ligase from Yersinia pseudotuberculosis serotype IB (strain PB1/+).